The primary structure comprises 923 residues: RNA polymerase-associated protein RapA (923 aa).

The Helicase ATP-binding domain occupies 162–332 (EVGNRVNPRV…FARLRLLDPE (171 aa)). An ATP-binding site is contributed by 175 to 182 (DEVGLGKT). The DEAH box signature appears at 278-281 (DEAH). In terms of domain architecture, Helicase C-terminal spans 443–597 (KIDWLIDFLK…TCPMGMALFS (155 aa)).

It belongs to the SNF2/RAD54 helicase family. RapA subfamily. In terms of assembly, interacts with the RNAP. Has a higher affinity for the core RNAP than for the holoenzyme. Its ATPase activity is stimulated by binding to RNAP.

Its function is as follows. Transcription regulator that activates transcription by stimulating RNA polymerase (RNAP) recycling in case of stress conditions such as supercoiled DNA or high salt concentrations. Probably acts by releasing the RNAP, when it is trapped or immobilized on tightly supercoiled DNA. Does not activate transcription on linear DNA. Probably not involved in DNA repair. The protein is RNA polymerase-associated protein RapA of Haemophilus influenzae (strain ATCC 51907 / DSM 11121 / KW20 / Rd).